The chain runs to 1507 residues: Histone-lysine N-methyltransferase set-2 (1507 aa).

The tract at residues 1 to 32 (MSTHDMNHHPPRKSHSKRDKPSSSNSGPKIEN) is disordered. Basic residues predominate over residues 9–18 (HPPRKSHSKR). In terms of domain architecture, RRM spans 128 to 199 (VSLFNMDDNC…QNLLATKCTP (72 aa)). Disordered regions lie at residues 280–578 (DYTM…QPQM), 650–697 (EPFS…EEPA), 803–826 (DEEKRKKEREEKARQEAEKPSNHL), 842–1058 (SSRG…GPII), and 1163–1199 (QKPRKQVFEKDPYEYYEPPPTKRPAPPPRFKKTFKPR). Positions 296 to 315 (PIPPPPIKEESPPPPPPPPV) are enriched in pro residues. A compositionally biased stretch (low complexity) spans 316–327 (ASVSNLAPVPSV). Over residues 331–342 (YYNNIQPSSSTM) the composition is skewed to polar residues. Residues 413 to 444 (VKYETYKMEKRKIKYEGGNKKYEQVHIKERTA) show a composition bias toward basic and acidic residues. Residues 456 to 465 (SSESASGSSS) are compositionally biased toward low complexity. The span at 478–488 (KKKKRPKSPNR) shows a compositional bias: basic residues. A compositionally biased stretch (polar residues) spans 566 to 575 (HLQTPYQHVQ). Basic and acidic residues-rich tracts occupy residues 668–680 (DVGRAESPEKPSL) and 803–823 (DEEKRKKEREEKARQEAEKPS). Over residues 846 to 868 (FYRKQKPIPKSHPKHQEHHHHAK) the composition is skewed to basic residues. The segment covering 869-908 (ASVSTPVHSSSTSRNSSVAPTPQRTVSTSSSSSSAATSAR) has biased composition (low complexity). The segment covering 941–951 (SFSSTSIQSSP) has biased composition (polar residues). Over residues 958–971 (SSSSRTSSSSSTSS) the composition is skewed to low complexity. Residues 973 to 982 (KQEETADEKS) are compositionally biased toward basic and acidic residues. The segment covering 990 to 1007 (SSDESSTTGSTATSVVSS) has biased composition (low complexity). A compositionally biased stretch (basic and acidic residues) spans 1015 to 1047 (QQEKTDGEPPKKKSQTDFISERVSKIEGEERPL). A compositionally biased stretch (pro residues) spans 1179–1190 (EPPPTKRPAPPP). The RxxxRR motif signature appears at 1340 to 1345 (RLLQRR). The 118-residue stretch at 1368 to 1485 (KMIKFARSRI…KGEEITYDYK (118 aa)) folds into the SET domain. An S-adenosyl-L-methionine-binding site is contributed by Tyr1484. Residues 1491 to 1507 (DKIDCLCGAKTCRGYLN) form the Post-SET domain.

The protein belongs to the class V-like SAM-binding methyltransferase superfamily. Component of the Set1C/COMPASS complex (also known as the SET2 complex), which contains at least set-2, swd-2.1, cfp-1, rbbp-5, wdr-5.1, dpy-30 and ash-2. In terms of tissue distribution, expressed in all cells of embryo. In L1 larva, it is predominantly expressed in Z2 and Z3 primordial germ cells. In adults, it is predominantly expressed in the germline.

It is found in the nucleus. It catalyses the reaction L-lysyl(4)-[histone H3] + 3 S-adenosyl-L-methionine = N(6),N(6),N(6)-trimethyl-L-lysyl(4)-[histone H3] + 3 S-adenosyl-L-homocysteine + 3 H(+). It carries out the reaction N(6)-methyl-L-lysyl(4)-[histone H3] + S-adenosyl-L-methionine = N(6),N(6)-dimethyl-L-lysyl(4)-[histone H3] + S-adenosyl-L-homocysteine + H(+). The catalysed reaction is N(6),N(6)-dimethyl-L-lysyl(4)-[histone H3] + S-adenosyl-L-methionine = N(6),N(6),N(6)-trimethyl-L-lysyl(4)-[histone H3] + S-adenosyl-L-homocysteine + H(+). Its function is as follows. Catalytic component of the COMPASS (Set1C) complex that specifically mono-, di- and trimethylates histone H3 to form H3K4me1/2/3. Binds RNAs which might negatively affect its histone methyltransferase activity. COMPASS recognizes ubiquitinated H2B on one face of the nucleosome which stimulates the methylation of H3 on the opposing face. H3 'Lys-4' methylation represents a specific tag for epigenetic transcriptional activation. Implicated in the epigenetic inheritance of lifespan over several generations. Acts in the germline to limit the longevity of the soma, probably by regulating a lipid metabolism pathway that signals from the germline to the intestine, thereby preventing accumulation of mono-unsaturated fatty acids. Methylation in the germline is required for germline development and fertility, possibly by ensuring genome stability. May act redundantly with mes-3 and mes-4 proteins in the development of a fertile germline. Required for RNAi. Functions as an antagonist of hpl-1 and hpl-2 activity in growth and somatic gonad development. Cooperates with jmjd-3.1 and egl-27 to ensure robust transdifferentiation of the Y rectal cell to the PDA motor neuron during larval development. The sequence is that of Histone-lysine N-methyltransferase set-2 (set-2) from Caenorhabditis elegans.